We begin with the raw amino-acid sequence, 440 residues long: Tubby-like F-box protein 13 (440 aa).

In terms of domain architecture, F-box spans 51–106; sequence SCWASLPPELLRDIIERLEESEATWPSRKHVVACAGVCRTWREMCKEIVKNPELCG.

It belongs to the TUB family. As to expression, ubiquitous.

The protein is Tubby-like F-box protein 13 (TULP13) of Oryza sativa subsp. japonica (Rice).